Reading from the N-terminus, the 90-residue chain is Progonadoliberin-3 (90 aa).

Positions 1 to 23 (MEASSRVTVQVLLLALVVQVTLS) are cleaved as a signal peptide. Glutamine 24 bears the Pyrrolidone carboxylic acid mark. The residue at position 33 (glycine 33) is a Glycine amide.

It belongs to the GnRH family.

It is found in the secreted. In terms of biological role, stimulates the secretion of gonadotropins. The polypeptide is Progonadoliberin-3 (gnrh3) (Pagrus major (Red sea bream)).